We begin with the raw amino-acid sequence, 536 residues long: 2-isopropylmalate synthase (536 aa).

The region spanning 8-269 (IIIFDTTLRD…YYNPFLGRPV (262 aa)) is the Pyruvate carboxyltransferase domain. Positions 17, 208, 210, and 244 each coordinate Mn(2+). The regulatory domain stretch occupies residues 408–536 (RLELVQVSCG…KEKAAVTSAS (129 aa)).

It belongs to the alpha-IPM synthase/homocitrate synthase family. LeuA type 1 subfamily. Homodimer. It depends on Mn(2+) as a cofactor.

The protein localises to the cytoplasm. The catalysed reaction is 3-methyl-2-oxobutanoate + acetyl-CoA + H2O = (2S)-2-isopropylmalate + CoA + H(+). It functions in the pathway amino-acid biosynthesis; L-leucine biosynthesis; L-leucine from 3-methyl-2-oxobutanoate: step 1/4. Functionally, catalyzes the condensation of the acetyl group of acetyl-CoA with 3-methyl-2-oxobutanoate (2-ketoisovalerate) to form 3-carboxy-3-hydroxy-4-methylpentanoate (2-isopropylmalate). The protein is 2-isopropylmalate synthase of Gloeothece citriformis (strain PCC 7424) (Cyanothece sp. (strain PCC 7424)).